The primary structure comprises 534 residues: Cytochrome c oxidase subunit 1 (534 aa).

Over 1–14 the chain is Mitochondrial matrix; that stretch reads MVQRWLYSTNAKDI. The helical transmembrane segment at 15-39 threads the bilayer; it reads AVLYFMLAIFSGMAGTAMSLIIRLE. Residues Glu-39, Ala-42, and Gly-44 each contribute to the Ca(2+) site. Residues 40–54 are Mitochondrial intermembrane-facing; it reads LAAPGSQYLHGNSQL. Residues 55–88 traverse the membrane as a helical segment; the sequence is FNVLVVGHAVLMIFFLVMPALIGGFGNYLLPLMI. His-62 lines the Fe(II)-heme a pocket. The Mitochondrial matrix portion of the chain corresponds to 89–97; it reads GATDTAFPR. Residues 98–118 form a helical membrane-spanning segment; the sequence is INNIAFWVLPMGLVCLVTSTL. Over 119–142 the chain is Mitochondrial intermembrane; that stretch reads VESGAGTGWTVYPPLSSIQAHSGP. The chain crosses the membrane as a helical span at residues 143-171; it reads SVDLAIFALHLTSISSLLGAINFIVTTLN. The Mitochondrial matrix portion of the chain corresponds to 172–183; that stretch reads MRTNGMTMHKLP. A helical transmembrane segment spans residues 184 to 215; the sequence is LFVWSIFITAFLLLLSLPVLSAGITMLLLDRN. Residues 216-228 are Mitochondrial intermembrane-facing; it reads FNTSFFEVSGGGD. Residues 229–263 form a helical membrane-spanning segment; sequence PILYEHLFWFFGHPEVYILIIPGFGIISHVVSTYS. His-241 serves as a coordination point for Cu cation. The segment at residues 241-245 is a cross-link (1'-histidyl-3'-tyrosine (His-Tyr)); sequence HPEVY. Residue Tyr-245 coordinates O2. At 264–269 the chain is on the mitochondrial matrix side; it reads KKPVFG. A helical transmembrane segment spans residues 270–295; the sequence is EISMVYAMASIGLLGFLVWSHHMYIV. Cu cation contacts are provided by His-290 and His-291. Residues 296-298 lie on the Mitochondrial intermembrane side of the membrane; it reads GLD. The chain crosses the membrane as a helical span at residues 299 to 327; it reads ADTRAYFTSATMIIAIPTGIKIFSWLATI. Residues 328 to 335 lie on the Mitochondrial matrix side of the membrane; that stretch reads HGGSIRLA. A helical membrane pass occupies residues 336–358; it reads TPMLYAIAFLFLFTMGGLTGVAL. Residues 359–370 are Mitochondrial intermembrane-facing; that stretch reads ANASLDVAFHDT. Residues His-368 and Asp-369 each coordinate Mg(2+). A helical membrane pass occupies residues 371 to 400; that stretch reads YYVVGHFHYVLSMGAIFSLFAGYYYWSPQI. Residue His-376 coordinates heme a3. His-378 lines the Fe(II)-heme a pocket. At 401–406 the chain is on the mitochondrial matrix side; that stretch reads LGLNYN. The helical transmembrane segment at 407-431 threads the bilayer; sequence EKLAQIQFWLIFIGANVIFFPMHFL. Residues 432 to 449 are Mitochondrial intermembrane-facing; sequence GINGMPRRIPDYPDAFAG. Pro-441 provides a ligand contact to Ca(2+). The chain crosses the membrane as a helical span at residues 450-474; the sequence is WNYVASIGSFIATLSLFLFIYILYD. Over 475–534 the chain is Mitochondrial matrix; the sequence is QLVNGLNNKVNNKSVIYNKAPDFVESNTIFNLNTVKSSSIEFLLTSPPAVHSFNTPAVQS.

This sequence belongs to the heme-copper respiratory oxidase family. Component of the cytochrome c oxidase (complex IV, CIV), a multisubunit enzyme composed of 12 subunits. The complex is composed of a catalytic core of 3 subunits COX1, COX2 and COX3, encoded in the mitochondrial DNA, and 9 supernumerary subunits COX4, COX5A (or COX5B), COX6, COX7, COX8, COX9, COX12, COX13 and COX26, which are encoded in the nuclear genome. The complex exists as a monomer or a dimer and forms supercomplexes (SCs) in the inner mitochondrial membrane with a dimer of ubiquinol-cytochrome c oxidoreductase (cytochrome b-c1 complex, complex III, CIII), resulting in 2 different assemblies (supercomplexes III(2)IV and III(2)IV(2)). Requires heme as cofactor. The cofactor is Cu cation. In terms of processing, the N-terminus is blocked.

Its subcellular location is the mitochondrion inner membrane. It carries out the reaction 4 Fe(II)-[cytochrome c] + O2 + 8 H(+)(in) = 4 Fe(III)-[cytochrome c] + 2 H2O + 4 H(+)(out). Its pathway is energy metabolism; oxidative phosphorylation. In terms of biological role, component of the cytochrome c oxidase, the last enzyme in the mitochondrial electron transport chain which drives oxidative phosphorylation. The respiratory chain contains 3 multisubunit complexes succinate dehydrogenase (complex II, CII), ubiquinol-cytochrome c oxidoreductase (cytochrome b-c1 complex, complex III, CIII) and cytochrome c oxidase (complex IV, CIV), that cooperate to transfer electrons derived from NADH and succinate to molecular oxygen, creating an electrochemical gradient over the inner membrane that drives transmembrane transport and the ATP synthase. Cytochrome c oxidase is the component of the respiratory chain that catalyzes the reduction of oxygen to water. Electrons originating from reduced cytochrome c in the intermembrane space (IMS) are transferred via the dinuclear copper A center (CU(A)) of COX2 and heme A of COX1 to the active site in COX1, a binuclear center (BNC) formed by heme A3 and copper B (CU(B)). The BNC reduces molecular oxygen to 2 water molecules using 4 electrons from cytochrome c in the IMS and 4 protons from the mitochondrial matrix. COX1 is a catalytic core subunit containing heme A and the active site BNC with heme A3 and the copper atom CU(B). The polypeptide is Cytochrome c oxidase subunit 1 (COX1) (Saccharomyces cerevisiae (strain ATCC 204508 / S288c) (Baker's yeast)).